Here is a 245-residue protein sequence, read N- to C-terminus: Octanoyltransferase (245 aa).

Residues 54–238 (GEATELVWLL…AFENIFGETR (185 aa)) form the BPL/LPL catalytic domain. Substrate is bound by residues 92 to 99 (RGGQLTYH), 167 to 169 (AIG), and 180 to 182 (GIA). Residue cysteine 198 is the Acyl-thioester intermediate of the active site.

Belongs to the LipB family.

The protein resides in the cytoplasm. It catalyses the reaction octanoyl-[ACP] + L-lysyl-[protein] = N(6)-octanoyl-L-lysyl-[protein] + holo-[ACP] + H(+). It functions in the pathway protein modification; protein lipoylation via endogenous pathway; protein N(6)-(lipoyl)lysine from octanoyl-[acyl-carrier-protein]: step 1/2. In terms of biological role, catalyzes the transfer of endogenously produced octanoic acid from octanoyl-acyl-carrier-protein onto the lipoyl domains of lipoate-dependent enzymes. Lipoyl-ACP can also act as a substrate although octanoyl-ACP is likely to be the physiological substrate. In Rhodopseudomonas palustris (strain TIE-1), this protein is Octanoyltransferase.